A 210-amino-acid chain; its full sequence is MAKTIGLLGKKLGMTRVFADDGSVVPVTVLEVGPCPVMQVKTEEKEGYNAIQIGYDALPERKVNKPAKGHQEKAGKGYFRHLREFPLESVADYELGQEISVDIFAAGEKVKVTGTSKGKGFQGVMKRWNFAGSRASHGAEKVHRSPGSIGHATFPGKVFKGKKMPGQMGNERVTVSNIEIVDVRADENVLVVKGQVPGPKNGLVMIRKTS.

A disordered region spans residues 139 to 165 (AEKVHRSPGSIGHATFPGKVFKGKKMP).

Belongs to the universal ribosomal protein uL3 family. In terms of assembly, part of the 50S ribosomal subunit. Forms a cluster with proteins L14 and L19.

Functionally, one of the primary rRNA binding proteins, it binds directly near the 3'-end of the 23S rRNA, where it nucleates assembly of the 50S subunit. This chain is Large ribosomal subunit protein uL3, found in Maridesulfovibrio salexigens (strain ATCC 14822 / DSM 2638 / NCIMB 8403 / VKM B-1763) (Desulfovibrio salexigens).